Here is a 42-residue protein sequence, read N- to C-terminus: ECNIGDICVVHGDCSECKCSDGRAAKCDREHGEPPHCSCSHR.

In terms of processing, contains four disulfide bonds.

Functionally, inhibitor of shell growth. In Haliotis laevigata (Smooth Australian abalone), this protein is Perlinhibin-related protein.